The primary structure comprises 395 residues: S-adenosylmethionine synthase (395 aa).

Histidine 16 lines the ATP pocket. Mg(2+) is bound at residue aspartate 18. Glutamate 44 is a K(+) binding site. Positions 57 and 100 each coordinate L-methionine. The interval 100–110 (QSPDIAQGVDR) is flexible loop. ATP contacts are provided by residues 167–169 (DAK), 233–234 (RF), aspartate 242, 248–249 (RK), alanine 265, and lysine 269. An L-methionine-binding site is contributed by aspartate 242. L-methionine is bound at residue lysine 273.

It belongs to the AdoMet synthase family. Homotetramer; dimer of dimers. It depends on Mg(2+) as a cofactor. K(+) is required as a cofactor.

The protein localises to the cytoplasm. The enzyme catalyses L-methionine + ATP + H2O = S-adenosyl-L-methionine + phosphate + diphosphate. Its pathway is amino-acid biosynthesis; S-adenosyl-L-methionine biosynthesis; S-adenosyl-L-methionine from L-methionine: step 1/1. In terms of biological role, catalyzes the formation of S-adenosylmethionine (AdoMet) from methionine and ATP. The overall synthetic reaction is composed of two sequential steps, AdoMet formation and the subsequent tripolyphosphate hydrolysis which occurs prior to release of AdoMet from the enzyme. In Burkholderia vietnamiensis (strain G4 / LMG 22486) (Burkholderia cepacia (strain R1808)), this protein is S-adenosylmethionine synthase.